The sequence spans 188 residues: Elongation factor P 1 (188 aa).

The protein belongs to the elongation factor P family.

It localises to the cytoplasm. It functions in the pathway protein biosynthesis; polypeptide chain elongation. Its function is as follows. Involved in peptide bond synthesis. Stimulates efficient translation and peptide-bond synthesis on native or reconstituted 70S ribosomes in vitro. Probably functions indirectly by altering the affinity of the ribosome for aminoacyl-tRNA, thus increasing their reactivity as acceptors for peptidyl transferase. In Porphyromonas gingivalis (strain ATCC BAA-308 / W83), this protein is Elongation factor P 1 (efp1).